The following is a 398-amino-acid chain: Argininosuccinate synthase (398 aa).

9-17 (AYSGGLDTS) lines the ATP pocket. Residues Y87 and S92 each contribute to the L-citrulline site. ATP is bound at residue G117. L-aspartate-binding residues include T119, N123, and D124. N123 contributes to the L-citrulline binding site. Residues R127, S176, S185, E261, and Y273 each coordinate L-citrulline.

It belongs to the argininosuccinate synthase family. Type 1 subfamily. Homotetramer.

Its subcellular location is the cytoplasm. It carries out the reaction L-citrulline + L-aspartate + ATP = 2-(N(omega)-L-arginino)succinate + AMP + diphosphate + H(+). Its pathway is amino-acid biosynthesis; L-arginine biosynthesis; L-arginine from L-ornithine and carbamoyl phosphate: step 2/3. This Clostridium tetani (strain Massachusetts / E88) protein is Argininosuccinate synthase.